Consider the following 317-residue polypeptide: MALTELRIASRRSQLAMVQTNWVKAELEKAHPGLTITVEAMATQGDKILDVALAKIGDKGLFTKELEAQMLVGRAEIAVHSLKDLPTNLPEGLMLGCITEREDPADALVVNAKNANHKLDTLPEGAVVGTSSLRRLAQLRHHYPHLSFKDVRGNVITRLEKLDSGDYDCLILAAAGLERLGFGNRIHQIIPGDISLHAVGQGALGIECVEDKPEVLEIIKVLEHTTTSRRCLAERAFLRELEGGCQVPIGVNSQINNEELTLTGMVASLDGKRLIRDEASGSAADPESIGIELAGKLKHQGAGAILKEIFDEVRPEA.

An S-(dipyrrolylmethanemethyl)cysteine modification is found at Cys-245.

It belongs to the HMBS family. As to quaternary structure, monomer. The cofactor is dipyrromethane.

It catalyses the reaction 4 porphobilinogen + H2O = hydroxymethylbilane + 4 NH4(+). Its pathway is porphyrin-containing compound metabolism; protoporphyrin-IX biosynthesis; coproporphyrinogen-III from 5-aminolevulinate: step 2/4. It functions in the pathway porphyrin-containing compound metabolism; chlorophyll biosynthesis. Its function is as follows. Tetrapolymerization of the monopyrrole PBG into the hydroxymethylbilane pre-uroporphyrinogen in several discrete steps. The chain is Porphobilinogen deaminase from Parasynechococcus marenigrum (strain WH8102).